The chain runs to 664 residues: Probable urea active transporter 1 (664 aa).

A run of 16 helical transmembrane segments spans residues 9–29, 56–76, 86–106, 132–152, 165–185, 189–209, 252–272, 290–310, 327–347, 353–373, 395–415, 428–448, 454–474, 496–516, 555–575, and 587–607; these read SVGYGIVVGLGLGFAALMIFV, GLVASAVVSSWTWASTLLTSA, GAFWYASGACVQILLFTVLAI, GVFLVFAYITNILVMAMLLCG, TVAVCFLLPVGVIIYTMFGGI, FLTDYIHTVIILVILIMFSLA, GAIFFIINLAGNFGTVFVDNG, ILGGLAWFAIPWLAATTMGLV, MSDLEVSEGLVLPYAAIALMG, ATLLLVFMAVTSAASAELIAV, LLYTGHASLIVFGFAMSGFAT, YLLMGVLVCPAVVPATCVMLF, IAVTVSPVLGIISSIITWLVV, AGNVVGLLSPALYILILSIIF, VAALIITAAFIILWPWPMYGT, and WVVVGLIWIFFTVFAVGIFPL.

It belongs to the sodium:solute symporter (SSF) (TC 2.A.21) family.

The protein localises to the membrane. In terms of biological role, involved in active transport of urea. The protein is Probable urea active transporter 1 (dur3-1) of Schizosaccharomyces pombe (strain 972 / ATCC 24843) (Fission yeast).